Reading from the N-terminus, the 294-residue chain is uncharacterized protein (294 aa).

This is an uncharacterized protein from Diadromus pulchellus idnoreovirus 1 (DpIRV-1).